Consider the following 235-residue polypeptide: Glycerol-3-phosphate acyltransferase (235 aa).

Helical transmembrane passes span 4 to 24 (LLAILAVSYLIGSIPTGIMAG), 56 to 76 (TVTLIDIIKGVVAAVSVVAFF), 94 to 114 (LLAGMSAVVGHVFTVFAGFKG), 124 to 144 (MLIGIAPVSMLMVIGIFLLTI), 152 to 172 (VASMLAAVAFPLIIAIRKYIF), and 191 to 211 (FHDSLDYHLMIFGLIVALGIL).

This sequence belongs to the PlsY family. In terms of assembly, probably interacts with PlsX.

Its subcellular location is the cell inner membrane. The enzyme catalyses an acyl phosphate + sn-glycerol 3-phosphate = a 1-acyl-sn-glycero-3-phosphate + phosphate. It functions in the pathway lipid metabolism; phospholipid metabolism. Its function is as follows. Catalyzes the transfer of an acyl group from acyl-phosphate (acyl-PO(4)) to glycerol-3-phosphate (G3P) to form lysophosphatidic acid (LPA). This enzyme utilizes acyl-phosphate as fatty acyl donor, but not acyl-CoA or acyl-ACP. The chain is Glycerol-3-phosphate acyltransferase from Chlorobium limicola (strain DSM 245 / NBRC 103803 / 6330).